The following is a 93-amino-acid chain: ATP-dependent Clp protease adapter protein ClpS (93 aa).

It belongs to the ClpS family. In terms of assembly, binds to the N-terminal domain of the chaperone ClpA.

In terms of biological role, involved in the modulation of the specificity of the ClpAP-mediated ATP-dependent protein degradation. In Gloeobacter violaceus (strain ATCC 29082 / PCC 7421), this protein is ATP-dependent Clp protease adapter protein ClpS.